The following is a 373-amino-acid chain: Peptide chain release factor 2 (373 aa).

Gln251 is modified (N5-methylglutamine).

The protein belongs to the prokaryotic/mitochondrial release factor family. Post-translationally, methylated by PrmC. Methylation increases the termination efficiency of RF2.

It is found in the cytoplasm. Its function is as follows. Peptide chain release factor 2 directs the termination of translation in response to the peptide chain termination codons UGA and UAA. This chain is Peptide chain release factor 2, found in Salinispora arenicola (strain CNS-205).